A 110-amino-acid chain; its full sequence is Phosphoribosyl-ATP pyrophosphatase (110 aa).

The protein belongs to the PRA-PH family.

The protein resides in the cytoplasm. It carries out the reaction 1-(5-phospho-beta-D-ribosyl)-ATP + H2O = 1-(5-phospho-beta-D-ribosyl)-5'-AMP + diphosphate + H(+). The protein operates within amino-acid biosynthesis; L-histidine biosynthesis; L-histidine from 5-phospho-alpha-D-ribose 1-diphosphate: step 2/9. In Clostridium novyi (strain NT), this protein is Phosphoribosyl-ATP pyrophosphatase.